The primary structure comprises 730 residues: Stonin-1 (730 aa).

Disordered regions lie at residues 1-26 (MYST…KRKD), 38-83 (NGLK…PLST), and 132-159 (SPHV…AGPQ). Low complexity-rich tracts occupy residues 54–65 (PSSASSTPLSSP) and 132–143 (SPHVSLPSSHSH). Residues 269–402 (GWSFMLRIPE…KLPATAKPKN (134 aa)) enclose the SHD domain. Positions 407-710 (EQEICLDIQD…ACYNIQVEIE (304 aa)) constitute an MHD domain.

It belongs to the Stoned B family.

The protein localises to the cytoplasm. Its subcellular location is the membrane. Functionally, may be involved in the endocytic machinery. This chain is Stonin-1 (Ston1), found in Mus musculus (Mouse).